We begin with the raw amino-acid sequence, 319 residues long: Bidirectional sugar transporter SWEET15 (319 aa).

Residues 1 to 10 (MAFMSMERST) lie on the Extracellular side of the membrane. Residues 11–31 (WAFTFGILGNLISLMVFLSPL) traverse the membrane as a helical segment. The MtN3/slv 1 domain occupies 13 to 99 (FTFGILGNLI…AMYLAYAPKS (87 aa)). Topologically, residues 32-50 (PTFYRVYRKKSTEGFQSTP) are cytoplasmic. The helical transmembrane segment at 51 to 71 (YVVTLFSCMLWMYYAFVKSGA) threads the bilayer. Residue glutamate 72 is a topological domain, extracellular. The helical transmembrane segment at 73-93 (LLVTINGVGCVIETVYLAMYL) threads the bilayer. At 94 to 106 (AYAPKSARMLTAK) the chain is on the cytoplasmic side. The chain crosses the membrane as a helical span at residues 107–127 (MLLGLNIGLFGVIALVTLLLS). Over 128 to 134 (RGELRVH) the chain is Extracellular. The helical transmembrane segment at 135–155 (VLGWICVAVSLSVFAAPLSII) threads the bilayer. The 85-residue stretch at 135–219 (VLGWICVAVS…ALYMAYRSKK (85 aa)) folds into the MtN3/slv 2 domain. Residues 156–167 (RLVIRTKSVEFM) lie on the Cytoplasmic side of the membrane. A helical transmembrane segment spans residues 168-188 (PFSLSFFLVLSAVIWFLYGLL). Residues 189–191 (KKD) are Extracellular-facing. The helical transmembrane segment at 192–212 (VFVALPNVLGFVFGVAQMALY) threads the bilayer. Over 213–319 (MAYRSKKPLV…KPDMAIVVEV (107 aa)) the chain is Cytoplasmic.

The protein belongs to the SWEET sugar transporter family. In terms of assembly, forms homooligomers and/or heterooligomers.

It localises to the cell membrane. Mediates both low-affinity uptake and efflux of sugar across the plasma membrane. The polypeptide is Bidirectional sugar transporter SWEET15 (SWEET15) (Oryza sativa subsp. indica (Rice)).